The chain runs to 103 residues: Large ribosomal subunit protein uL24 (103 aa).

The protein belongs to the universal ribosomal protein uL24 family. Part of the 50S ribosomal subunit.

One of two assembly initiator proteins, it binds directly to the 5'-end of the 23S rRNA, where it nucleates assembly of the 50S subunit. Functionally, one of the proteins that surrounds the polypeptide exit tunnel on the outside of the subunit. This is Large ribosomal subunit protein uL24 from Haemophilus influenzae (strain ATCC 51907 / DSM 11121 / KW20 / Rd).